The chain runs to 190 residues: Ribose 1,5-bisphosphate phosphokinase PhnN (190 aa).

19–26 (GPSGVGKD) contributes to the ATP binding site.

It belongs to the ribose 1,5-bisphosphokinase family.

The enzyme catalyses alpha-D-ribose 1,5-bisphosphate + ATP = 5-phospho-alpha-D-ribose 1-diphosphate + ADP. It functions in the pathway metabolic intermediate biosynthesis; 5-phospho-alpha-D-ribose 1-diphosphate biosynthesis; 5-phospho-alpha-D-ribose 1-diphosphate from D-ribose 5-phosphate (route II): step 3/3. In terms of biological role, catalyzes the phosphorylation of ribose 1,5-bisphosphate to 5-phospho-D-ribosyl alpha-1-diphosphate (PRPP). The chain is Ribose 1,5-bisphosphate phosphokinase PhnN from Ruegeria sp. (strain TM1040) (Silicibacter sp.).